Here is a 364-residue protein sequence, read N- to C-terminus: Mitoferrin-2 (364 aa).

Gly residues predominate over residues 1-17 (MELEGRGAGGVAGGPAA). Disordered stretches follow at residues 1–28 (MELE…ESAL) and 40–60 (GAGG…PDSG). Residues 18–27 (GPGRSPGESA) are compositionally biased toward low complexity. Solcar repeat units lie at residues 70–158 (ATVT…LKKT), 168–252 (NSHI…LQEH), and 259–352 (YNPS…FKYL). A run of 6 helical transmembrane segments spans residues 72-91 (VTTH…CVMY), 133-152 (GLNV…FACY), 170-189 (HIAN…AAMN), 227-246 (SYTT…FMTY), 261-280 (PSSH…AATT), and 327-346 (GVQA…WSVY).

The protein belongs to the mitochondrial carrier (TC 2.A.29) family. Ubiquitous. Expressed in placenta, lung, kidney, pancreas, liver, brain, skeletal muscle and heart.

The protein localises to the mitochondrion inner membrane. The enzyme catalyses Fe(2+)(in) = Fe(2+)(out). In terms of biological role, mitochondrial iron transporter that mediates iron uptake. Probably required for heme synthesis of hemoproteins and Fe-S cluster assembly in non-erythroid cells. The chain is Mitoferrin-2 (SLC25A28) from Homo sapiens (Human).